The primary structure comprises 510 residues: Hydroperoxide bicyclase CYP5164A3, mitochondrial (510 aa).

The transit peptide at 1 to 31 directs the protein to the mitochondrion; that stretch reads MQRVGAASPTCSSLQAPAAAPPILTISPHHR. Residue Cys-452 coordinates heme.

It belongs to the cytochrome P450 family. The cofactor is heme.

The protein resides in the mitochondrion. The enzyme catalyses (13S)-hydroperoxy-(9Z,11E,15Z)-octadecatrienoate = plasmodiophorol A. It catalyses the reaction (13S)-hydroperoxy-(9Z,11E,15Z)-octadecatrienoate = plasmodiophorol B. The catalysed reaction is (13S)-hydroperoxy-(9Z,11E,15Z)-octadecatrienoate = ectocarpin A + H2O. It carries out the reaction (15S)-hydroperoxy-(5Z,8Z,11Z,13E,17Z)-eicosapentaenoate = ectocarpin B + H2O. The enzyme catalyses (15S)-hydroperoxy-(5Z,8Z,11Z,13E,17Z)-eicosapentaenoate = ectocarpin C. It catalyses the reaction (15S)-hydroperoxy-(5Z,8Z,11Z,13E,17Z)-eicosapentaenoate + H2O = ectocarpin D. The catalysed reaction is (15S)-hydroperoxy-(5Z,8Z,11Z,13E,17Z)-eicosapentaenoate = 14-oxo-15-hydroxy-(5Z,8Z,11Z,17Z)-eicosatetraenoate. It participates in lipid metabolism; oxylipin biosynthesis. In terms of biological role, cytochrome P450 hydroperoxide bicyclase involved in the metabolism of oxylipins 'ectocarpins' natural products, such as hybridalactone, ecklonilactones and derivatives. Isomerizes the hydroperoxides into epoxyalcohols via epoxyallylic radical. Can use alpha-linolenic acid 13(S)-hydroperoxide (13-HPOTE) and eicosapentaenoic acid 15(S)-hydroperoxide (15-HPEPE) as preferred substrate to produce corresponding heterobicyclic oxylipins, such as plasmodiophorol A (6-oxabicyclo[3.1.0]hexane), plasmodiophorol B (2-oxabicyclo[2.2.1]heptane) and plasmodiophorol C (4-hydroxymethyl-1,2-dihydroxycyclopentane) as well as ectocarpin A (3-propenyl-6-oxabicyclo[3.1.0]hexane) formed at about 15:3:3:1 ratio for 13-HPOTE, and analogous to plasmodiophorols A and B including ectocarpin B (3-[(1'E)-propenyl]-6-oxabicyclo[3.1.0]hexane), ectocarpin C, 14-oxo-15-hydroxy-5,8,11,17-eicosate-traenoic acid and ectocarpin D for 15-HPEPE. Barely able to use linoleic acid 13-hydroperoxide (13-HPODE), linoleic acid 9-hydroperoxide (9-HPODE), eicosapentaenoic acid 15-hydroperoxide (15-HPEPE), and alpha-linolenic acid 9-hydroperoxide (9-HPOTE) as substrates. The polypeptide is Hydroperoxide bicyclase CYP5164A3, mitochondrial (Ectocarpus siliculosus (Brown alga)).